The following is a 687-amino-acid chain: Cytochrome b/c1 (687 aa).

Residues 46–66 (FGAILSFMLGMQILTGVILAM) traverse the membrane as a helical segment. The heme b site is built by histidine 96 and histidine 110. Transmembrane regions (helical) follow at residues 126–146 (VLWILGVIIYLLMMATGFMGY) and 160–180 (VITNLFSAIPYFGESIVTLLW). Heme b is bound by residues histidine 197 and histidine 211. 6 helical membrane passes run 199–219 (LLPFLIAGVVVLHVWALHVAG), 247–267 (FGVACFLLLYAWFIFYMPNYL), 305–325 (LAGVIGMFSAIIILCFLPWLD), 337–357 (LAKQFFWIFVAVCILLGYLGA), 363–383 (IYVIAGRVLTVCYFAYFLIVL), and 410–430 (AVASVAIALVAAGALFLGSLQ). Positions 404–434 (LAKGGKAVASVAIALVAAGALFLGSLQDARA) are internal signal sequence. A Cytochrome c domain is found at 458 to 643 (GALQRGLKVY…TVAQYSKDVT (186 aa)). Heme c is bound by residues cysteine 471, cysteine 474, histidine 475, and methionine 616. Residues 666–678 (VFLIIFAGLMYFT) form a helical membrane-spanning segment.

This sequence belongs to the cytochrome b family. In terms of assembly, the main subunits of complex b-c1 are: cytochrome b, cytochrome c1 and the Rieske protein. It depends on heme b as a cofactor. The cofactor is heme c. Post-translationally, the protein is post-translationally processed into cytochrome b and c1. This occurs by processing between residues 434 and 435 without processing between cytochrome b and the N-terminal of the putative signal sequence domain.

The protein localises to the cell inner membrane. Component of the ubiquinol-cytochrome c reductase complex (complex III or cytochrome b-c1 complex), which is a respiratory chain that generates an electrochemical potential coupled to ATP synthesis. c1 functions as an electron donor to cytochrome c. This chain is Cytochrome b/c1 (fbcH), found in Bradyrhizobium diazoefficiens (strain JCM 10833 / BCRC 13528 / IAM 13628 / NBRC 14792 / USDA 110).